The sequence spans 387 residues: S-adenosylmethionine synthase (387 aa).

Residue histidine 17 coordinates ATP. Aspartate 19 is a binding site for Mg(2+). Glutamate 45 contacts K(+). The L-methionine site is built by glutamate 58 and glutamine 101. A flexible loop region spans residues 101-111 (QSPDIAQGVDR). Residues 168–170 (DAK), 234–235 (RF), aspartate 243, 249–250 (RK), alanine 266, and lysine 270 contribute to the ATP site. Residue aspartate 243 coordinates L-methionine. Residue lysine 274 coordinates L-methionine.

It belongs to the AdoMet synthase family. Homotetramer; dimer of dimers. Mg(2+) is required as a cofactor. It depends on K(+) as a cofactor.

It localises to the cytoplasm. It catalyses the reaction L-methionine + ATP + H2O = S-adenosyl-L-methionine + phosphate + diphosphate. It functions in the pathway amino-acid biosynthesis; S-adenosyl-L-methionine biosynthesis; S-adenosyl-L-methionine from L-methionine: step 1/1. Catalyzes the formation of S-adenosylmethionine (AdoMet) from methionine and ATP. The overall synthetic reaction is composed of two sequential steps, AdoMet formation and the subsequent tripolyphosphate hydrolysis which occurs prior to release of AdoMet from the enzyme. This Bordetella bronchiseptica (strain ATCC BAA-588 / NCTC 13252 / RB50) (Alcaligenes bronchisepticus) protein is S-adenosylmethionine synthase.